Reading from the N-terminus, the 232-residue chain is Phosphatidylserine decarboxylase proenzyme (232 aa).

S190 serves as the catalytic Schiff-base intermediate with substrate; via pyruvic acid. S190 bears the Pyruvic acid (Ser); by autocatalysis mark.

The protein belongs to the phosphatidylserine decarboxylase family. PSD-A subfamily. In terms of assembly, heterodimer of a large membrane-associated beta subunit and a small pyruvoyl-containing alpha subunit. Pyruvate is required as a cofactor. Is synthesized initially as an inactive proenzyme. Formation of the active enzyme involves a self-maturation process in which the active site pyruvoyl group is generated from an internal serine residue via an autocatalytic post-translational modification. Two non-identical subunits are generated from the proenzyme in this reaction, and the pyruvate is formed at the N-terminus of the alpha chain, which is derived from the carboxyl end of the proenzyme. The post-translation cleavage follows an unusual pathway, termed non-hydrolytic serinolysis, in which the side chain hydroxyl group of the serine supplies its oxygen atom to form the C-terminus of the beta chain, while the remainder of the serine residue undergoes an oxidative deamination to produce ammonia and the pyruvoyl prosthetic group on the alpha chain.

The protein localises to the cell membrane. The enzyme catalyses a 1,2-diacyl-sn-glycero-3-phospho-L-serine + H(+) = a 1,2-diacyl-sn-glycero-3-phosphoethanolamine + CO2. It participates in phospholipid metabolism; phosphatidylethanolamine biosynthesis; phosphatidylethanolamine from CDP-diacylglycerol: step 2/2. Functionally, catalyzes the formation of phosphatidylethanolamine (PtdEtn) from phosphatidylserine (PtdSer). This is Phosphatidylserine decarboxylase proenzyme from Rhizobium etli (strain ATCC 51251 / DSM 11541 / JCM 21823 / NBRC 15573 / CFN 42).